The primary structure comprises 207 residues: Small ribosomal subunit protein uS4 (207 aa).

A disordered region spans residues 31–55 (KCKLDSKPGQHGRTSGARTSDYGTQ). Residues 42–53 (GRTSGARTSDYG) are compositionally biased toward polar residues. The 64-residue stretch at 97–160 (SRLDNVVYRM…KKQARIVEAL (64 aa)) folds into the S4 RNA-binding domain.

The protein belongs to the universal ribosomal protein uS4 family. In terms of assembly, part of the 30S ribosomal subunit. Contacts protein S5. The interaction surface between S4 and S5 is involved in control of translational fidelity.

One of the primary rRNA binding proteins, it binds directly to 16S rRNA where it nucleates assembly of the body of the 30S subunit. Functionally, with S5 and S12 plays an important role in translational accuracy. The chain is Small ribosomal subunit protein uS4 from Burkholderia thailandensis (strain ATCC 700388 / DSM 13276 / CCUG 48851 / CIP 106301 / E264).